Reading from the N-terminus, the 56-residue chain is Large ribosomal subunit protein bL33 (56 aa).

A compositionally biased stretch (basic and acidic residues) spans 1-12; sequence MASKGGREKIKL. The segment at 1–27 is disordered; that stretch reads MASKGGREKIKLESTAGTGHFYTTNKN.

This sequence belongs to the bacterial ribosomal protein bL33 family.

This Leptothrix cholodnii (strain ATCC 51168 / LMG 8142 / SP-6) (Leptothrix discophora (strain SP-6)) protein is Large ribosomal subunit protein bL33.